The primary structure comprises 169 residues: Ureidoglycolate lyase (169 aa).

This sequence belongs to the ureidoglycolate lyase family. In terms of assembly, homodimer. Requires Ni(2+) as cofactor.

The catalysed reaction is (S)-ureidoglycolate = urea + glyoxylate. It participates in nitrogen metabolism; (S)-allantoin degradation. Catalyzes the catabolism of the allantoin degradation intermediate (S)-ureidoglycolate, generating urea and glyoxylate. Involved in the utilization of allantoin as nitrogen source. This chain is Ureidoglycolate lyase, found in Pseudomonas aeruginosa (strain LESB58).